The sequence spans 403 residues: Anti-sigma-I factor RsgI8 (403 aa).

Over 1–59 the chain is Cytoplasmic; the sequence is MTKQKGTILKLKNNLAIIMTSDCKIVSIKRQPGMYEGLEISFNKNEIINKKNKLAFYSR. In terms of domain architecture, RsgI N-terminal anti-sigma spans 4–51; it reads QKGTILKLKNNLAIIMTSDCKIVSIKRQPGMYEGLEISFNKNEIINKK. The helical transmembrane segment at 60–80 threads the bilayer; sequence IAAGIAAIFIIMVISFNLFNN. The Extracellular segment spans residues 81–403; the sequence is NDVYAYVAID…KAKNSIEKMP (323 aa). Composition is skewed to basic and acidic residues over residues 254–314, 324–335, and 349–403; these read VHNV…EPAK, LPKDKTIPEEKT, and VEPK…EKMP. The segment at 254–403 is disordered; that stretch reads VHNVKKEEPK…KAKNSIEKMP (150 aa).

Interacts (via RsgI N-terminal anti-sigma domain) with SigI8.

The protein resides in the cell membrane. Anti-sigma factor for SigI8. Negatively regulates SigI8 activity through direct interaction. The protein is Anti-sigma-I factor RsgI8 of Acetivibrio thermocellus (strain ATCC 27405 / DSM 1237 / JCM 9322 / NBRC 103400 / NCIMB 10682 / NRRL B-4536 / VPI 7372) (Clostridium thermocellum).